The sequence spans 377 residues: Phospho-N-acetylmuramoyl-pentapeptide-transferase (377 aa).

Helical transmembrane passes span 27–47 (TAFA…YVIE), 71–91 (GTPT…TLLW), 94–114 (LSDP…AIGF), 139–159 (ILAS…GSYS), 182–202 (VPHL…IVIV), 216–236 (GLAI…TYVS), 252–272 (MVGE…GFLW), 280–300 (IFMG…VAVV), 305–325 (LLLP…ILQV), and 354–374 (KVIV…LTTL).

It belongs to the glycosyltransferase 4 family. MraY subfamily. Requires Mg(2+) as cofactor.

Its subcellular location is the cell inner membrane. It catalyses the reaction UDP-N-acetyl-alpha-D-muramoyl-L-alanyl-gamma-D-glutamyl-meso-2,6-diaminopimeloyl-D-alanyl-D-alanine + di-trans,octa-cis-undecaprenyl phosphate = di-trans,octa-cis-undecaprenyl diphospho-N-acetyl-alpha-D-muramoyl-L-alanyl-D-glutamyl-meso-2,6-diaminopimeloyl-D-alanyl-D-alanine + UMP. It participates in cell wall biogenesis; peptidoglycan biosynthesis. In terms of biological role, catalyzes the initial step of the lipid cycle reactions in the biosynthesis of the cell wall peptidoglycan: transfers peptidoglycan precursor phospho-MurNAc-pentapeptide from UDP-MurNAc-pentapeptide onto the lipid carrier undecaprenyl phosphate, yielding undecaprenyl-pyrophosphoryl-MurNAc-pentapeptide, known as lipid I. This chain is Phospho-N-acetylmuramoyl-pentapeptide-transferase, found in Acidobacterium capsulatum (strain ATCC 51196 / DSM 11244 / BCRC 80197 / JCM 7670 / NBRC 15755 / NCIMB 13165 / 161).